We begin with the raw amino-acid sequence, 968 residues long: RNA polymerase-associated protein RapA (968 aa).

In terms of domain architecture, Helicase ATP-binding spans 163-332 (EVGQRFAPRV…FARLRLLDPD (170 aa)). Residue 176–183 (DEVGLGKT) coordinates ATP. The DEAH box signature appears at 278–281 (DEAH). One can recognise a Helicase C-terminal domain in the interval 491-645 (RVDWLIDFLK…TCPTGHILFN (155 aa)).

It belongs to the SNF2/RAD54 helicase family. RapA subfamily. As to quaternary structure, interacts with the RNAP. Has a higher affinity for the core RNAP than for the holoenzyme. Its ATPase activity is stimulated by binding to RNAP.

Functionally, transcription regulator that activates transcription by stimulating RNA polymerase (RNAP) recycling in case of stress conditions such as supercoiled DNA or high salt concentrations. Probably acts by releasing the RNAP, when it is trapped or immobilized on tightly supercoiled DNA. Does not activate transcription on linear DNA. Probably not involved in DNA repair. In Shewanella loihica (strain ATCC BAA-1088 / PV-4), this protein is RNA polymerase-associated protein RapA.